We begin with the raw amino-acid sequence, 248 residues long: Probable transcriptional regulatory protein BT_2363 (248 aa).

It belongs to the TACO1 family.

Its subcellular location is the cytoplasm. The sequence is that of Probable transcriptional regulatory protein BT_2363 from Bartonella tribocorum (strain CIP 105476 / IBS 506).